A 362-amino-acid polypeptide reads, in one-letter code: Peptide chain release factor 1 (362 aa).

Position 236 is an N5-methylglutamine (Gln-236).

This sequence belongs to the prokaryotic/mitochondrial release factor family. Methylated by PrmC. Methylation increases the termination efficiency of RF1.

Its subcellular location is the cytoplasm. In terms of biological role, peptide chain release factor 1 directs the termination of translation in response to the peptide chain termination codons UAG and UAA. The protein is Peptide chain release factor 1 of Lactobacillus helveticus (strain DPC 4571).